A 127-amino-acid polypeptide reads, in one-letter code: Protein ApaG (127 aa).

Residues 3–127 (NERKYSIKVE…FILSVPRVLH (125 aa)) enclose the ApaG domain.

The polypeptide is Protein ApaG (Nitrosomonas europaea (strain ATCC 19718 / CIP 103999 / KCTC 2705 / NBRC 14298)).